A 404-amino-acid chain; its full sequence is MAKQTVADLKDIKGKKVLVRVDFNVPIKGGVIGDDNRIVAALPTIQYIIDNGGKAILLSHLGRIKSDEDKKELTLKPVAARLGELLNKDVAFVASNEGQELEDAINAMTDGQVLVMENTRFQDIDNDFGKRESKNDPKLGEYWASLGDMFVNDAFGTAHRAHASNVGIATAMKANNKPAVAGYLLEKEIKFLGEAVDAPERPFVAILGGAKVSDKIGVIEHLLAKADKVIVGGGMTYTFYAAKGLSIGNSLVEEDKIELAKELIEKAGDKLVLPVDNVVADAFSNDAKTETVEGNIPDGYMALDIGPKAIADFENVLKDAKTVVWNGPMGVFEMDNFAKGTLAIGEFLGNLSGATTIVGGGDSTAAVKKLGVGDKLTHISTGGGASLEYLEGKTLPGIAAISDK.

Substrate-binding positions include 22–24 (DFN), arginine 37, 60–63 (HLGR), arginine 120, and arginine 160. Residues lysine 215, glutamate 333, and 360 to 363 (GGDS) contribute to the ATP site.

It belongs to the phosphoglycerate kinase family. Monomer.

The protein resides in the cytoplasm. It carries out the reaction (2R)-3-phosphoglycerate + ATP = (2R)-3-phospho-glyceroyl phosphate + ADP. Its pathway is carbohydrate degradation; glycolysis; pyruvate from D-glyceraldehyde 3-phosphate: step 2/5. In Latilactobacillus sakei subsp. sakei (strain 23K) (Lactobacillus sakei subsp. sakei), this protein is Phosphoglycerate kinase.